Here is a 268-residue protein sequence, read N- to C-terminus: Indole-3-glycerol phosphate synthase (268 aa).

The protein belongs to the TrpC family.

The enzyme catalyses 1-(2-carboxyphenylamino)-1-deoxy-D-ribulose 5-phosphate + H(+) = (1S,2R)-1-C-(indol-3-yl)glycerol 3-phosphate + CO2 + H2O. The protein operates within amino-acid biosynthesis; L-tryptophan biosynthesis; L-tryptophan from chorismate: step 4/5. The chain is Indole-3-glycerol phosphate synthase from Lachnospira eligens (strain ATCC 27750 / DSM 3376 / VPI C15-48 / C15-B4) (Eubacterium eligens).